The sequence spans 107 residues: UPF0145 protein YbjQ (107 aa).

This sequence belongs to the UPF0145 family.

The chain is UPF0145 protein YbjQ from Escherichia coli O139:H28 (strain E24377A / ETEC).